A 757-amino-acid polypeptide reads, in one-letter code: Palmitoyltransferase AKR1 (757 aa).

2 stretches are compositionally biased toward polar residues: residues 1–20 (MSDI…STDP) and 36–46 (ESISSLQPIVS). The disordered stretch occupies residues 1-54 (MSDINTESGESTSLPNSTDPPLSDVNIDVEDDDTAESISSLQPIVSNTTNPPEE). Topologically, residues 1–307 (MSDINTESGE…KLFKKSDHAK (307 aa)) are cytoplasmic. ANK repeat units follow at residues 58–88 (PVLG…DLNT), 92–121 (GDIT…DVNA), 126–155 (LEAT…DPTM), 159–188 (QGFN…AKGI), 197–226 (KGRT…STKI), and 230–259 (GGFT…DFFL). The chain crosses the membrane as a helical span at residues 308 to 328 (VITFFVPLVALSIIFILFTHL). Topologically, residues 329-331 (HPL) are lumenal. Residues 332–352 (FALLISLIFGLAVNKALKELI) traverse the membrane as a helical segment. The Cytoplasmic portion of the chain corresponds to 353–375 (LPSYSNYGLHSTSLLKSPFLSGT). Residues 376-396 (FFGSLLLLTIVWIFKIAPFTI) form a helical membrane-spanning segment. Residues 397–402 (FKSRLL) lie on the Lumenal side of the membrane. The chain crosses the membrane as a helical span at residues 403–423 (TNFFMFLILMQIYYLFIKLIF). Residues 424-498 (SDPGCVPIET…YNDIGLKNHK (75 aa)) lie on the Cytoplasmic side of the membrane. One can recognise a DHHC domain in the interval 455 to 505 (NFCLETWIRKPLRSHFSTLNTHNVARFDHFCPWIYNDIGLKNHKNFMWFIL). Residue Cys485 is the S-palmitoyl cysteine intermediate of the active site. A helical membrane pass occupies residues 499–519 (NFMWFILLTEVGIWFFISLTM). Residues 520-550 (KYFDILEDTNEDVACFLLGDDELCAGFVYDR) lie on the Lumenal side of the membrane. The chain crosses the membrane as a helical span at residues 551 to 571 (FTFLIALWALIQSVWVGFLIV). Residues 572–757 (VQVFQTFTGV…YPEPTGPESV (186 aa)) are Cytoplasmic-facing. The disordered stretch occupies residues 614–647 (ELRNDDDDTAASRTGNNPNHSNGTTIPSEGSRIN). Residues 624–646 (ASRTGNNPNHSNGTTIPSEGSRI) show a composition bias toward polar residues.

The protein belongs to the DHHC palmitoyltransferase family. AKR/ZDHHC17 subfamily.

Its subcellular location is the early endosome membrane. It is found in the golgi apparatus membrane. The catalysed reaction is L-cysteinyl-[protein] + hexadecanoyl-CoA = S-hexadecanoyl-L-cysteinyl-[protein] + CoA. Functionally, palmitoyltransferase specific for casein kinase 1. This Naumovozyma castellii (Yeast) protein is Palmitoyltransferase AKR1 (AKR1).